Consider the following 264-residue polypeptide: Glutamate racemase (264 aa).

Residues 10 to 11 (DS) and 42 to 43 (YG) each bind substrate. Cys-73 functions as the Proton donor/acceptor in the catalytic mechanism. Residue 74-75 (NT) coordinates substrate. Cys-183 serves as the catalytic Proton donor/acceptor. 184-185 (TH) serves as a coordination point for substrate.

This sequence belongs to the aspartate/glutamate racemases family.

The enzyme catalyses L-glutamate = D-glutamate. The protein operates within cell wall biogenesis; peptidoglycan biosynthesis. Its function is as follows. Provides the (R)-glutamate required for cell wall biosynthesis. The chain is Glutamate racemase from Streptococcus pneumoniae (strain ATCC BAA-255 / R6).